A 322-amino-acid polypeptide reads, in one-letter code: Protein-methionine-sulfoxide reductase catalytic subunit MsrP (322 aa).

Positions 1 to 59 (MSFRDALNLPSSEITDESVYRDRRRLLQLLALTPALGVAGCAEADPPPPPKTVVTPAQA) form a signal peptide, tat-type signal. Mo-molybdopterin is bound by residues asparagine 79, 82–83 (YE), cysteine 137, threonine 172, asparagine 220, arginine 225, and 236–238 (SIK).

It belongs to the MsrP family. As to quaternary structure, heterodimer of a catalytic subunit (MsrP) and a heme-binding subunit (MsrQ). Requires Mo-molybdopterin as cofactor. In terms of processing, predicted to be exported by the Tat system. The position of the signal peptide cleavage has not been experimentally proven.

It localises to the periplasm. The catalysed reaction is L-methionyl-[protein] + a quinone + H2O = L-methionyl-(S)-S-oxide-[protein] + a quinol. The enzyme catalyses L-methionyl-[protein] + a quinone + H2O = L-methionyl-(R)-S-oxide-[protein] + a quinol. Its function is as follows. Part of the MsrPQ system that repairs oxidized periplasmic proteins containing methionine sulfoxide residues (Met-O), using respiratory chain electrons. Thus protects these proteins from oxidative-stress damage caused by reactive species of oxygen and chlorine generated by the host defense mechanisms. MsrPQ is essential for the maintenance of envelope integrity under bleach stress, rescuing a wide series of structurally unrelated periplasmic proteins from methionine oxidation. The catalytic subunit MsrP is non-stereospecific, being able to reduce both (R-) and (S-) diastereoisomers of methionine sulfoxide. This chain is Protein-methionine-sulfoxide reductase catalytic subunit MsrP, found in Xanthomonas axonopodis pv. citri (strain 306).